The chain runs to 169 residues: Probable inosine/xanthosine triphosphatase (169 aa).

D58 contacts Mg(2+).

Belongs to the YjjX NTPase family. As to quaternary structure, homodimer. Mg(2+) is required as a cofactor. The cofactor is Mn(2+).

The enzyme catalyses XTP + H2O = XDP + phosphate + H(+). It catalyses the reaction ITP + H2O = IDP + phosphate + H(+). In terms of biological role, phosphatase that hydrolyzes non-canonical purine nucleotides such as XTP and ITP to their respective diphosphate derivatives. Probably excludes non-canonical purines from DNA/RNA precursor pool, thus preventing their incorporation into DNA/RNA and avoiding chromosomal lesions. This is Probable inosine/xanthosine triphosphatase from Archaeoglobus fulgidus (strain ATCC 49558 / DSM 4304 / JCM 9628 / NBRC 100126 / VC-16).